Reading from the N-terminus, the 269-residue chain is Chromophore lyase CRL, chloroplastic (269 aa).

A helical transmembrane segment spans residues alanine 19 to isoleucine 36.

It belongs to the CpcT/CpeT biliprotein lyase family. As to expression, mostly expressed in shoot apices, to a lower extent, in leaves, inflorescence stems, buds and cotyledons, and, at low levels, in roots and siliques.

It localises to the plastid. The protein resides in the chloroplast outer membrane. Its function is as follows. Covalently attaches a chromophore to Cys residue(s) of phycobiliproteins. Required for plastid division, and involved in cell differentiation and regulation of the cell division plane. Maintenance of plastid homeostasis controls plant preconditioning to stress and stress acclimation. Functionally, confers sensitivity to cabbage leaf curl virus (CaLCuV), probably by supporting viral movement. This Arabidopsis thaliana (Mouse-ear cress) protein is Chromophore lyase CRL, chloroplastic (CRL).